The following is a 146-amino-acid chain: Interleukin-3 (146 aa).

An N-terminal signal peptide occupies residues 1–17; it reads MSSLSILHLLLLLLSLH. Residue N65 is glycosylated (N-linked (GlcNAc...) asparagine).

It belongs to the IL-3 family. Monomer. As to expression, activated T-cells, mast cells, natural killer cells.

The protein localises to the secreted. In terms of biological role, granulocyte/macrophage colony-stimulating factors are cytokines that act in hematopoiesis by controlling the production, differentiation, and function of 2 related white cell populations of the blood, the granulocytes and the monocytes-macrophages. This CSF induces granulocytes, macrophages, mast cells, stem cells, erythroid cells, eosinophils and megakaryocytes. The protein is Interleukin-3 (IL3) of Ovis aries (Sheep).